The chain runs to 1355 residues: Phospholipid-transporting ATPase DRS2 (1355 aa).

Residues Met-1 to Glu-15 are compositionally biased toward basic and acidic residues. The segment at Met-1–Pro-50 is disordered. The involved in autoinhibition stretch occupies residues Met-1–Arg-104. Residues Met-1 to Glu-221 lie on the Cytoplasmic side of the membrane. Acidic residues predominate over residues Asp-16–Asp-26. The span at Ser-30–Asn-44 shows a compositional bias: polar residues. The residue at position 102 (Ser-102) is a Phosphoserine. Residues Phe-222 to Val-242 traverse the membrane as a helical segment. An involved in phosphatidylserine substrate recognition region spans residues Gln-237 to Gln-238. Residues Ser-243 to Asn-246 are Lumenal-facing. The helical transmembrane segment at Arg-247–Ile-267 threads the bilayer. Residues Glu-268–Ile-449 are Cytoplasmic-facing. A helical membrane pass occupies residues Ala-450–Ser-470. Residues Thr-471–Leu-490 are Lumenal-facing. Residues Phe-491–Phe-511 form a helical membrane-spanning segment. Topologically, residues Val-512–Ile-1012 are cytoplasmic. Asp-560 acts as the 4-aspartylphosphate intermediate in catalysis. ATP is bound by residues Asp-560, Lys-561, Thr-562, Glu-655, Phe-698, Ser-700, Lys-703, Lys-721, Arg-755, Thr-756, Thr-835, Gly-836, Asp-837, Arg-928, and Lys-934. Asp-560 lines the Mg(2+) pocket. Thr-562 serves as a coordination point for Mg(2+). Asp-954 is a Mg(2+) binding site. Residues Asn-957 and Asp-958 each coordinate ATP. Residue Asp-958 coordinates Mg(2+). The chain crosses the membrane as a helical span at residues Leu-1013–Asn-1033. At Ala-1034–Ser-1043 the chain is on the lumenal side. A helical membrane pass occupies residues Trp-1044–Phe-1064. The Cytoplasmic portion of the chain corresponds to Asp-1065–Phe-1094. Residues Trp-1095–Ile-1115 traverse the membrane as a helical segment. At Tyr-1116–His-1131 the chain is on the lumenal side. Residues Trp-1132–Leu-1152 form a helical membrane-spanning segment. A 1,2-diacyl-sn-glycero-3-phospho-(1D-myo-inositol 4-phosphate) is bound at residue Lys-1149. Residues Val-1153–Thr-1161 are Cytoplasmic-facing. A helical membrane pass occupies residues Leu-1162–Ile-1182. Residues Phe-1183–Ser-1202 are Lumenal-facing. A helical membrane pass occupies residues Gly-1203 to Trp-1223. A 1,2-diacyl-sn-glycero-3-phospho-(1D-myo-inositol 4-phosphate) is bound by residues Arg-1219, Trp-1223, Lys-1224, Tyr-1235, and His-1236. Over Lys-1224–Ile-1355 the chain is Cytoplasmic. An interaction with GEA2 region spans residues Tyr-1230–Glu-1282. Residues Glu-1231–Ala-1309 are involved in autoinhibition. Residues Gln-1305 to Ile-1355 are disordered. Polar residues predominate over residues Ala-1307–Phe-1323. Residues Ser-1346–Ile-1355 are compositionally biased toward basic and acidic residues.

It belongs to the cation transport ATPase (P-type) (TC 3.A.3) family. Type IV subfamily. In terms of assembly, component of a flippase complex consisting of DRS2 and CDC50. Interacts with CDC50; the interaction is direct, is required for their mutual export from the endoplasmic reticulum, and preferentially occurs when DRS2 is in the E2P state. Interacts (via C-terminus) with GEA2 (via SEC7 domain); the interaction is direct. Interacts with GEA1. It depends on Mg(2+) as a cofactor.

It localises to the golgi apparatus. The protein resides in the trans-Golgi network membrane. The protein localises to the endosome membrane. The catalysed reaction is ATP + H2O + phospholipidSide 1 = ADP + phosphate + phospholipidSide 2.. It catalyses the reaction a 1,2-diacyl-sn-glycero-3-phospho-L-serine(out) + ATP + H2O = a 1,2-diacyl-sn-glycero-3-phospho-L-serine(in) + ADP + phosphate + H(+). The enzyme catalyses a 1,2-diacyl-sn-glycero-3-phosphoethanolamine(out) + ATP + H2O = a 1,2-diacyl-sn-glycero-3-phosphoethanolamine(in) + ADP + phosphate + H(+). Its activity is regulated as follows. Allosterically activated by binding 1,2-diacyl-sn-glycero-3-phospho-(1D-myo-inositol 4-phosphate) (phosphatidylinositol 4-phosphate). Inhibited by orthovanadate, N-ethylmaleimide, trifluoroberyllate and tetrafluoroaluminate; orthovanadate and N-ethylmaleimide inhibit phosphorylation of the active site aspartic acid. The ATPase activity is not potently stimulated by phosphatidylinositol 3-phosphate and phosphatidylinositol 5-phosphate, phosphatidylinositol 4,5-bisphosphate or phosphatidylcholine. Not inhibited by azide. In terms of biological role, catalytic component of a P4-ATPase flippase complex which catalyzes the hydrolysis of ATP coupled to the transport of phosphatidylserine and small amounts of ethanolamine from the lumen to the cytosolic leaflet of the trans-Golgi network and ensures the maintenance of asymmetric distribution of phospholipids. Contributes to clathrin-coated vesicle formation, endocytosis, and protein trafficking between the Golgi and endosomal system. Does not appear to transport phosphatidylcholine or sphingomyelin. This is Phospholipid-transporting ATPase DRS2 from Saccharomyces cerevisiae (strain ATCC 204508 / S288c) (Baker's yeast).